Here is a 922-residue protein sequence, read N- to C-terminus: Translation initiation factor IF-2 (922 aa).

Residues 33-310 (KTASSTVQPP…SKRQKRNEYE (278 aa)) form a disordered region. The segment covering 75–87 (PAAKAAPKAAAKP) has biased composition (low complexity). Composition is skewed to pro residues over residues 88 to 98 (GPKPGPKPGPQ) and 140 to 150 (TPKPGAKPGPK). Composition is skewed to low complexity over residues 151 to 169 (PGGA…GRAP) and 202 to 211 (PGSRPGGAKK). 2 stretches are compositionally biased toward gly residues: residues 215–225 (KPGGAKQGGGR) and 248–292 (FGGG…GRPG). Residues 296-305 (RKGRKSKRQK) are compositionally biased toward basic residues. The 173-residue stretch at 418–590 (QRPPVVTVMG…VLLTADASLD (173 aa)) folds into the tr-type G domain. Positions 427 to 434 (GHVDHGKT) are G1. 427-434 (GHVDHGKT) is a binding site for GTP. Residues 452–456 (GITQH) are G2. The interval 477 to 480 (DTPG) is G3. GTP is bound by residues 477–481 (DTPGH) and 531–534 (NKID). The interval 531–534 (NKID) is G4. Positions 567 to 569 (SAK) are G5.

Belongs to the TRAFAC class translation factor GTPase superfamily. Classic translation factor GTPase family. IF-2 subfamily.

It localises to the cytoplasm. One of the essential components for the initiation of protein synthesis. Protects formylmethionyl-tRNA from spontaneous hydrolysis and promotes its binding to the 30S ribosomal subunits. Also involved in the hydrolysis of GTP during the formation of the 70S ribosomal complex. The sequence is that of Translation initiation factor IF-2 from Corynebacterium jeikeium (strain K411).